Here is a 631-residue protein sequence, read N- to C-terminus: Transforming acidic coiled-coil-containing protein 3 (631 aa).

Ser-2 bears the N-acetylserine mark. Ser-39 bears the Phosphoserine mark. Residues 42–59 are compositionally biased toward polar residues; the sequence is ENVPPQSQAKATNVTFQT. Positions 42-70 are disordered; that stretch reads ENVPPQSQAKATNVTFQTPPRDPQTHRIL. Ser-71 is modified (phosphoserine). 2 necessary but not sufficient for spindle localization regions span residues 311 to 366 and 384 to 631; these read EESF…PMPV and KPTE…MEKI. At Ser-347 the chain carries Phosphoserine; by AURKA. The segment at 363 to 385 is disordered; that stretch reads PMPVAPITNSTQDTEEESGSGKP. A coiled-coil region spans residues 431 to 630; that stretch reads QKDLDAVVNV…CDDLISKMEK (200 aa).

Belongs to the TACC family. Interacts with GCN5L2 and PCAF. The coiled coil C-terminal region interacts with AH receptor nuclear translocator protein (ARNT) and ARNT2. Interacts with CCDC100/CEP120. Interacts with CKAP5 independently of clathrin. Interacts with CKAP5 and clathrin forming the TACC3/ch-TOG/clathrin complex located at spindle inter-microtubules bridges; TACC3 (phosphorylated at Ser-347 by AURKA) and CLTC are proposed to form a composite microtubule interaction surface. As to expression, embryonically expressed.

It is found in the cytoplasm. Its subcellular location is the cytoskeleton. It localises to the microtubule organizing center. The protein resides in the centrosome. The protein localises to the spindle pole. Its function is as follows. Plays a role in the microtubule-dependent coupling of the nucleus and the centrosome. Involved in the processes that regulate centrosome-mediated interkinetic nuclear migration (INM) of neural progenitors. Acts as a component of the TACC3/ch-TOG/clathrin complex proposed to contribute to stabilization of kinetochore fibers of the mitotic spindle by acting as inter-microtubule bridge. The TACC3/ch-TOG/clathrin complex is required for the maintenance of kinetochore fiber tension. May be involved in the control of cell growth and differentiation. May have a role in embryonic development. This chain is Transforming acidic coiled-coil-containing protein 3 (Tacc3), found in Mus musculus (Mouse).